The chain runs to 66 residues: Large ribosomal subunit protein bL28 (66 aa).

It belongs to the bacterial ribosomal protein bL28 family.

The sequence is that of Large ribosomal subunit protein bL28 from Oenococcus oeni (strain ATCC BAA-331 / PSU-1).